A 142-amino-acid chain; its full sequence is Large ribosomal subunit protein uL13 (142 aa).

The protein belongs to the universal ribosomal protein uL13 family. In terms of assembly, part of the 50S ribosomal subunit.

In terms of biological role, this protein is one of the early assembly proteins of the 50S ribosomal subunit, although it is not seen to bind rRNA by itself. It is important during the early stages of 50S assembly. This is Large ribosomal subunit protein uL13 from Bordetella petrii (strain ATCC BAA-461 / DSM 12804 / CCUG 43448).